Here is a 257-residue protein sequence, read N- to C-terminus: Dihydroorotate dehydrogenase B (NAD(+)), electron transfer subunit (257 aa).

Residues I2–V101 enclose the FAD-binding FR-type domain. Residues R52–S55, I69–R71, and G76–T77 contribute to the FAD site. C220, C225, C228, and C244 together coordinate [2Fe-2S] cluster.

It belongs to the PyrK family. Heterotetramer of 2 PyrK and 2 PyrD type B subunits. [2Fe-2S] cluster serves as cofactor. Requires FAD as cofactor.

It participates in pyrimidine metabolism; UMP biosynthesis via de novo pathway; orotate from (S)-dihydroorotate (NAD(+) route): step 1/1. Responsible for channeling the electrons from the oxidation of dihydroorotate from the FMN redox center in the PyrD type B subunit to the ultimate electron acceptor NAD(+). This is Dihydroorotate dehydrogenase B (NAD(+)), electron transfer subunit from Lysinibacillus sphaericus (strain C3-41).